The chain runs to 517 residues: GMP synthase [glutamine-hydrolyzing] (517 aa).

In terms of domain architecture, Glutamine amidotransferase type-1 spans 9–199 (RILILDFGSQ…VLGVCGCERL (191 aa)). Residue cysteine 86 is the Nucleophile of the active site. Active-site residues include histidine 173 and glutamate 175. Residues 200–392 (WTSESIIEDA…LGLPYNMLYR (193 aa)) enclose the GMPS ATP-PPase domain. ATP is bound at residue 227–233 (SGGVDSS).

In terms of assembly, homodimer.

It catalyses the reaction XMP + L-glutamine + ATP + H2O = GMP + L-glutamate + AMP + diphosphate + 2 H(+). Its pathway is purine metabolism; GMP biosynthesis; GMP from XMP (L-Gln route): step 1/1. In terms of biological role, catalyzes the synthesis of GMP from XMP. This chain is GMP synthase [glutamine-hydrolyzing], found in Vibrio parahaemolyticus serotype O3:K6 (strain RIMD 2210633).